Consider the following 251-residue polypeptide: 2,3-bisphosphoglycerate-dependent phosphoglycerate mutase (251 aa).

Residues 8-15, 21-22, Arg60, 87-90, Lys98, 114-115, and 183-184 contribute to the substrate site; these read RHGESLWN, TG, ERHY, RR, and GN. His9 (tele-phosphohistidine intermediate) is an active-site residue. Catalysis depends on Glu87, which acts as the Proton donor/acceptor.

This sequence belongs to the phosphoglycerate mutase family. BPG-dependent PGAM subfamily.

It carries out the reaction (2R)-2-phosphoglycerate = (2R)-3-phosphoglycerate. It functions in the pathway carbohydrate degradation; glycolysis; pyruvate from D-glyceraldehyde 3-phosphate: step 3/5. Functionally, catalyzes the interconversion of 2-phosphoglycerate and 3-phosphoglycerate. In Thermoanaerobacter pseudethanolicus (strain ATCC 33223 / 39E) (Clostridium thermohydrosulfuricum), this protein is 2,3-bisphosphoglycerate-dependent phosphoglycerate mutase.